A 79-amino-acid polypeptide reads, in one-letter code: Small polypeptide DEVIL 8 (79 aa).

Residues 1–12 show a composition bias toward polar residues; that stretch reads MSRLRNSAQLQL. Residues 1–37 form a disordered region; that stretch reads MSRLRNSAQLQLSKKESLGDNGGALNTTRSSRQKQGK. N26 carries an N-linked (GlcNAc...) asparagine glycan. A required for DVL/RTFL small polypeptide activity region spans residues 39 to 70; it reads GFTRKCGRLVKEQRARFYIMRRCVVMLICWTD. The chain crosses the membrane as a helical span at residues 55-71; that stretch reads FYIMRRCVVMLICWTDH. N74 carries an N-linked (GlcNAc...) asparagine glycan.

The protein belongs to the DVL/RTFL small polypeptides family.

Its subcellular location is the cell membrane. Its function is as follows. Small polypeptide acting as a regulatory molecule which coordinates cellular responses required for differentiation, growth and development, probably by restricting polar cell proliferation in lateral organs and coordinating socket cell recruitment and differentiation at trichome sites. The chain is Small polypeptide DEVIL 8 from Arabidopsis thaliana (Mouse-ear cress).